Consider the following 143-residue polypeptide: Hemoglobin subunit alpha-A (143 aa).

The 142-residue stretch at 2-143 (SLSGKDKSVV…LALALAERYR (142 aa)) folds into the Globin domain. His60 serves as a coordination point for O2. Residue His89 coordinates heme b.

Belongs to the globin family. In terms of assembly, heterotetramer of two alpha chains and two beta chains. As to expression, red blood cells.

In terms of biological role, involved in oxygen transport from gills to the various peripheral tissues. In Seriola quinqueradiata (Five-ray yellowtail), this protein is Hemoglobin subunit alpha-A (hbaa).